Here is a 93-residue protein sequence, read N- to C-terminus: CRISPR-associated endoribonuclease Cas2 (93 aa).

D8 provides a ligand contact to Mg(2+).

Belongs to the CRISPR-associated endoribonuclease Cas2 protein family. In terms of assembly, homodimer, forms a heterotetramer with a Cas1 homodimer. Mg(2+) serves as cofactor.

Its function is as follows. CRISPR (clustered regularly interspaced short palindromic repeat), is an adaptive immune system that provides protection against mobile genetic elements (viruses, transposable elements and conjugative plasmids). CRISPR clusters contain sequences complementary to antecedent mobile elements and target invading nucleic acids. CRISPR clusters are transcribed and processed into CRISPR RNA (crRNA). Functions as a ssRNA-specific endoribonuclease. Involved in the integration of spacer DNA into the CRISPR cassette. This Thermofilum pendens (strain DSM 2475 / Hrk 5) protein is CRISPR-associated endoribonuclease Cas2.